The sequence spans 193 residues: Ribonuclease HII (193 aa).

Positions 15–193 constitute an RNase H type-2 domain; the sequence is CIVAGIDEAG…PYHRRSFRCC (179 aa). A divalent metal cation-binding residues include aspartate 21, glutamate 22, and aspartate 112.

The protein belongs to the RNase HII family. Mn(2+) serves as cofactor. Requires Mg(2+) as cofactor.

It localises to the cytoplasm. The catalysed reaction is Endonucleolytic cleavage to 5'-phosphomonoester.. In terms of biological role, endonuclease that specifically degrades the RNA of RNA-DNA hybrids. The sequence is that of Ribonuclease HII from Rickettsia rickettsii (strain Iowa).